The primary structure comprises 342 residues: 4-hydroxy-2-oxovalerate aldolase (342 aa).

Residues 8-260 (ITVHDMTLRD…ATGVDLFKMQ (253 aa)) form the Pyruvate carboxyltransferase domain. 16–17 (RD) provides a ligand contact to substrate. Asp-17 serves as a coordination point for Mn(2+). His-20 acts as the Proton acceptor in catalysis. Substrate is bound by residues Ser-170 and His-199. Residues His-199 and His-201 each contribute to the Mn(2+) site. Tyr-290 is a binding site for substrate.

Belongs to the 4-hydroxy-2-oxovalerate aldolase family.

The catalysed reaction is (S)-4-hydroxy-2-oxopentanoate = acetaldehyde + pyruvate. In Albidiferax ferrireducens (strain ATCC BAA-621 / DSM 15236 / T118) (Rhodoferax ferrireducens), this protein is 4-hydroxy-2-oxovalerate aldolase.